A 68-amino-acid polypeptide reads, in one-letter code: Medusin-AS (68 aa).

A signal peptide spans 1–22 (MAFLKKSLFLVLFLGLVSLSVC). A propeptide spanning residues 23 to 49 (EEEKRESEEEKNEQEEDDRDERSEEKR) is cleaved from the precursor. Residues 24-46 (EEKRESEEEKNEQEEDDRDERSE) form a disordered region. Residues 31–41 (EEKNEQEEDDR) are compositionally biased toward acidic residues. Leu67 bears the Leucine amide mark.

Belongs to the frog skin active peptide (FSAP) family. Medusin subfamily. As to expression, expressed by the skin glands.

Its subcellular location is the secreted. Antimicrobial peptide active against Gram-positive bacteria and fungi but inactive against Gram-negative bacteria. Also inhibits growth of B.dendrobatidis zoospores at high concentrations. Shows anticancer activities. Shows hemolytic activity. The protein is Medusin-AS of Agalychnis spurrelli (Gliding leaf frog).